Here is a 333-residue protein sequence, read N- to C-terminus: Ribosomal protein L11 methyltransferase (333 aa).

4 residues coordinate S-adenosyl-L-methionine: threonine 181, glycine 202, aspartate 224, and asparagine 268.

It belongs to the methyltransferase superfamily. PrmA family.

The protein localises to the cytoplasm. It catalyses the reaction L-lysyl-[protein] + 3 S-adenosyl-L-methionine = N(6),N(6),N(6)-trimethyl-L-lysyl-[protein] + 3 S-adenosyl-L-homocysteine + 3 H(+). Functionally, methylates ribosomal protein L11. The protein is Ribosomal protein L11 methyltransferase of Helicobacter pylori (strain ATCC 700392 / 26695) (Campylobacter pylori).